Here is a 1120-residue protein sequence, read N- to C-terminus: Topless-related protein 1 (1120 aa).

Residues 4-36 enclose the LisH domain; sequence LSRELVFLILQFLDEEKFKETVHKLEQESGFFF. One can recognise a CTLH domain in the interval 34-92; it reads FFFNMKYFEDEVHNGNWDEVEKYLSGFTKVDDNRYSMKIFFEIRKQKYLEALDRHDRPK. Disordered regions lie at residues 210 to 235 and 283 to 307; these read ARAPSPVNNPLLGSLPKAEGFPPLGA and HPRTPPSNSAVDYPSGDSDHVSKRT. Ser214 bears the Phosphoserine mark. 14 WD repeats span residues 353–393, 415–454, 460–501, 504–545, 548–591, 595–634, 639–678, 699–745, 755–794, 822–860, 863–903, 906–945, 999–1038, and 1052–1091; these read SQGS…RLVQ, EPVVSVNRVIWSPDGSLFGVAYSRHIVQLYSYHGGEDMRQ, AHVG…KRYT, GHEA…SRVD, APGR…VKRT, FHKRSLGVVQFDTTKNRYLAAGDDFSIKFWDMDTIQLLTA, GGLQASPRIRFNKEGSLLAVSANDNMIKVMANSDGLRLLH, ERPA…EPSQ, MRVTKISRLIFTNSGNAILALASNAIHLLWKWQRNDRNAT, NPEEAVPCFALSKNDSYVMSASGGKISLFNMMTFKTMAT, PPPP…VKSK, GHSKRITGLAFSNVLNVLVSSGADAQLCVWNTDGWEKQKS, ESAAPITHATFSCDSQLIYTSFMDATICVFSSANLRLRCR, and SNVHPLVIAAHPQESNMFAVGLSDGGVHIFEPLESEGKWG. The tract at residues 1087–1120 is disordered; that stretch reads EGKWGVAPPPENGSASAVTATPSVGASASDQPQR. The span at 1099-1120 shows a compositional bias: polar residues; it reads GSASAVTATPSVGASASDQPQR.

In terms of assembly, tetramer. Interacts with SNC1 (via TIR domain) and HDA19. Interacts with SPL (via EAR motif). Interacts with SPEAR3/TIE1. Binds to and corepresses GAF1/IDD2. In terms of tissue distribution, highly expressed in stamen primordium, microsporocyte, ovule primordium and megasporocyte during sporogenesis.

It localises to the nucleus. Transcriptional corepressor. Activates TIR-NB-LRR R protein-mediated immune responses through repression of negative regulators such as CNGC2/DND1. Negative regulator of jasmonate responses. This is Topless-related protein 1 (TPR1) from Arabidopsis thaliana (Mouse-ear cress).